We begin with the raw amino-acid sequence, 773 residues long: E3 ubiquitin-protein ligase msl-2 (773 aa).

Residues Cys-41, Cys-44, Cys-59, His-61, Cys-64, Cys-67, Cys-78, and Cys-84 each coordinate Zn(2+). The RING-type zinc-finger motif lies at 41–85 (CVVCCQLLVDPYSPKGKRCQHNVCRLCLRGKKHLFPSCTQCEGCS). A coiled-coil region spans residues 424 to 468 (VQTELQDAESLQKDFEDAKAAAEEAKEKEKDLHAISAELQKEDSD). Residues 460 to 525 (AELQKEDSDE…EKVKPPKPKC (66 aa)) form a disordered region. The region spanning 520–571 (PPKPKCRCGISGSSNTLTTCRNSRCPCYKSYNSCAGCHCVCCKNPHKEDYVE) is the CXC MSL2-type domain. Residues Cys-525, Cys-527, Cys-539, Cys-544, Cys-546, Cys-553, Cys-556, Cys-558, and Cys-561 each coordinate Zn(2+). Residues 571 to 773 (ESDEDDDLED…EEIMSGSDDL (203 aa)) are C-terminal disordered region (CTD). The span at 572-581 (SDEDDDLEDF) shows a compositional bias: acidic residues. The interval 572–616 (SDEDDDLEDFEMPKDVPEPMTQSEEPVVAEPRQEENSMAPPDSSA) is disordered. The interval 620-685 (LVPLNNLQQS…SLPQYAYIMP (66 aa)) is clamp-binding domain (CBD). The tract at residues 650–708 (QGSKPLDPVTVGFTIRVQLQHTDGFGSLPQYAYIMPTIDPPNPPAPSLSPPPPPAPDRE) is pro/Bas region. A compositionally biased stretch (pro residues) spans 687 to 704 (IDPPNPPAPSLSPPPPPA). Residues 687-773 (IDPPNPPAPS…EEIMSGSDDL (87 aa)) are disordered. Over residues 705–714 (PDREVIEPPA) the composition is skewed to basic and acidic residues. The segment covering 715–726 (KKFRTSRTRRGR) has biased composition (basic residues). The segment covering 742-759 (GSRSNSAAGDRSSATDNA) has biased composition (polar residues).

The protein belongs to the MSL2 family. In terms of assembly, component of the male-specific lethal (MSL) histone acetyltransferase complex, composed of mof, mle, msl-1, msl-2 and msl-3 proteins, as well as roX1 and roX2 non-coding RNAs. When not associated with chromatin, the MSL complex associates with msl-2 mRNAs, possibly to regulate the amount of available MSL complex. Interacts with Clamp; promoting cooperative binding to DNA PionX sites and recruitment of the MSL complex to chromatin. Post-translationally, autoubiquitinated.

It is found in the nucleus. The protein localises to the chromosome. It carries out the reaction S-ubiquitinyl-[E2 ubiquitin-conjugating enzyme]-L-cysteine + [acceptor protein]-L-lysine = [E2 ubiquitin-conjugating enzyme]-L-cysteine + N(6)-ubiquitinyl-[acceptor protein]-L-lysine.. It functions in the pathway protein modification; protein ubiquitination. In terms of biological role, limiting component of the male-specific lethal (MSL) histone acetyltransferase complex, a multiprotein complex essential for elevating transcription of the single X chromosome in the male (X chromosome dosage compensation). The MSL complex specifically associates with the single X chromosome in males and mediates formation of H4K16ac, promoting a two-fold activation of X chromosome. Msl-2 is only produced in males, constituting the limiting component of the MSL complex. Within the MSL complex, msl-2 mediates the selective binding to the X chromosome and recruitment of the MSL complex via two different mechanisms. Recognizes DNA motifs that are enriched on X chromosome, named PionX sites, which are characterized by sequence features and distinct DNA conformation (base roll). Specific recognition of the X chromosome is also mediated by the formation of a gel-like state: msl-2 undergoes liquid-liquid phase separation upon binding to roX1 and roX2 non-coding RNAs, leading to nucleate the MSL complex on the X chromosome. Msl-2 is also required for translation and/or stability of msl-1 in males. Also acts as an E3 ubiquitin ligase: in complex with msl-1, mediates ubiquitination of histone H2B at 'Lys-34' (H2BK34Ub). Also catalyzes ubiquitination of msl-1, msl-3 and mof components of the MSL complex. This Drosophila melanogaster (Fruit fly) protein is E3 ubiquitin-protein ligase msl-2.